The sequence spans 375 residues: Serine protease 23 (375 aa).

The first 23 residues, 1-23, serve as a signal peptide directing secretion; it reads MAGTPGHPIFLLLLLRAIGQVSP. The N-linked (GlcNAc...) asparagine glycan is linked to asparagine 93. Cysteine 153 and cysteine 169 are joined by a disulfide. Histidine 168 (charge relay system) is an active-site residue. A glycan (N-linked (GlcNAc...) asparagine) is linked at asparagine 199. Active-site charge relay system residues include aspartate 232 and serine 308.

It belongs to the peptidase S1 family.

The protein localises to the secreted. The sequence is that of Serine protease 23 (PRSS23) from Bos taurus (Bovine).